A 463-amino-acid chain; its full sequence is Glutamate--tRNA ligase 1 (463 aa).

The 'HIGH' region signature appears at 11–21; the sequence is PSPTGYLHIGG. Positions 240–244 match the 'KMSKS' region motif; sequence KLSKR. Lys-243 serves as a coordination point for ATP.

Belongs to the class-I aminoacyl-tRNA synthetase family. Glutamate--tRNA ligase type 1 subfamily. Monomer.

The protein localises to the cytoplasm. It carries out the reaction tRNA(Glu) + L-glutamate + ATP = L-glutamyl-tRNA(Glu) + AMP + diphosphate. In terms of biological role, catalyzes the attachment of glutamate to tRNA(Glu) in a two-step reaction: glutamate is first activated by ATP to form Glu-AMP and then transferred to the acceptor end of tRNA(Glu). The polypeptide is Glutamate--tRNA ligase 1 (Campylobacter jejuni subsp. doylei (strain ATCC BAA-1458 / RM4099 / 269.97)).